Reading from the N-terminus, the 205-residue chain is Large ribosomal subunit protein uL18 (205 aa).

It belongs to the universal ribosomal protein uL18 family. Part of the 50S ribosomal subunit. Contacts the 5S and 23S rRNAs.

Its function is as follows. This is one of the proteins that bind and probably mediate the attachment of the 5S RNA into the large ribosomal subunit, where it forms part of the central protuberance. The sequence is that of Large ribosomal subunit protein uL18 from Pyrobaculum aerophilum (strain ATCC 51768 / DSM 7523 / JCM 9630 / CIP 104966 / NBRC 100827 / IM2).